Consider the following 162-residue polypeptide: 2-C-methyl-D-erythritol 2,4-cyclodiphosphate synthase (162 aa).

A divalent metal cation contacts are provided by aspartate 12 and histidine 14. 4-CDP-2-C-methyl-D-erythritol 2-phosphate-binding positions include 12-14 (DVH) and 38-39 (HS). Position 46 (histidine 46) interacts with a divalent metal cation. 4-CDP-2-C-methyl-D-erythritol 2-phosphate-binding positions include 60 to 62 (DIG), 136 to 139 (TTTE), phenylalanine 143, and arginine 146.

The protein belongs to the IspF family. As to quaternary structure, homotrimer. Requires a divalent metal cation as cofactor.

The enzyme catalyses 4-CDP-2-C-methyl-D-erythritol 2-phosphate = 2-C-methyl-D-erythritol 2,4-cyclic diphosphate + CMP. It participates in isoprenoid biosynthesis; isopentenyl diphosphate biosynthesis via DXP pathway; isopentenyl diphosphate from 1-deoxy-D-xylulose 5-phosphate: step 4/6. Its function is as follows. Involved in the biosynthesis of isopentenyl diphosphate (IPP) and dimethylallyl diphosphate (DMAPP), two major building blocks of isoprenoid compounds. Catalyzes the conversion of 4-diphosphocytidyl-2-C-methyl-D-erythritol 2-phosphate (CDP-ME2P) to 2-C-methyl-D-erythritol 2,4-cyclodiphosphate (ME-CPP) with a corresponding release of cytidine 5-monophosphate (CMP). The chain is 2-C-methyl-D-erythritol 2,4-cyclodiphosphate synthase from Porphyromonas gingivalis (strain ATCC BAA-308 / W83).